Here is a 334-residue protein sequence, read N- to C-terminus: Tetratricopeptide repeat protein 24 (334 aa).

TPR repeat units follow at residues 35–68 (GPFY…CRQP), 72–105 (ATVL…HGSV), 112–145 (GRSF…AQDT), and 152–185 (WQAC…CQHE). The tract at residues 220 to 258 (PGKLQTSRKAKTSARVQSSAEDAQESQWEGEASEGGHEK) is disordered. A compositionally biased stretch (polar residues) spans 233 to 246 (ARVQSSAEDAQESQ).

This Mus musculus (Mouse) protein is Tetratricopeptide repeat protein 24 (Ttc24).